A 285-amino-acid polypeptide reads, in one-letter code: MALERLFRRKRPSGGNRDVPELWTKCEACGAQIYKKEFQENLHVCPKCGHHHRLPAQERVAMLADPGTFQETTRLRPLDPLGFVDTKPYVERLKAYQAETGRPDAILGGTCQIGGVPAVLLVMDYAFAGGSMGSVVGEEIARGAERAAEEGRALVIVAASGGARMQEAALSLMQMAKTVMSLDRVWARRLPYVSVLTDPTTGGVTASFAALADVILAEPGALIGFAGPRVIRQTIRQELPEGFQRSEFLLKHGMVDRVTDRRRLKEELVRVLRHLHPGVAYAPGV.

The 264-residue stretch at 22-285 (LWTKCEACGA…HPGVAYAPGV (264 aa)) folds into the CoA carboxyltransferase N-terminal domain. Zn(2+) is bound by residues cysteine 26, cysteine 29, cysteine 45, and cysteine 48. The C4-type zinc-finger motif lies at 26–48 (CEACGAQIYKKEFQENLHVCPKC).

This sequence belongs to the AccD/PCCB family. As to quaternary structure, acetyl-CoA carboxylase is a heterohexamer composed of biotin carboxyl carrier protein (AccB), biotin carboxylase (AccC) and two subunits each of ACCase subunit alpha (AccA) and ACCase subunit beta (AccD). It depends on Zn(2+) as a cofactor.

The protein localises to the cytoplasm. It catalyses the reaction N(6)-carboxybiotinyl-L-lysyl-[protein] + acetyl-CoA = N(6)-biotinyl-L-lysyl-[protein] + malonyl-CoA. Its pathway is lipid metabolism; malonyl-CoA biosynthesis; malonyl-CoA from acetyl-CoA: step 1/1. Its function is as follows. Component of the acetyl coenzyme A carboxylase (ACC) complex. Biotin carboxylase (BC) catalyzes the carboxylation of biotin on its carrier protein (BCCP) and then the CO(2) group is transferred by the transcarboxylase to acetyl-CoA to form malonyl-CoA. The sequence is that of Acetyl-coenzyme A carboxylase carboxyl transferase subunit beta from Thermus thermophilus (strain ATCC BAA-163 / DSM 7039 / HB27).